A 786-amino-acid polypeptide reads, in one-letter code: E3 ubiquitin-protein ligase pub3 (786 aa).

The region spanning 1–109 is the C2 domain; it reads MEQGAKRVRF…RSNREVSLTR (109 aa). Disordered regions lie at residues 134 to 225 and 263 to 306; these read IRAP…NSNA and TWTR…DSGN. The span at 142-193 shows a compositional bias: low complexity; it reads SSTTANRTTSTPTTTTARTTRTTPRPTATTNTSNQSTSNSTRNGTSAATSNG. The segment covering 204–213 has biased composition (polar residues); sequence HRSSPVTNRQ. The segment covering 214-225 has biased composition (low complexity); the sequence is TNNTSALSNSNA. A WW 1 domain is found at 236-269; sequence GRLPPGWERRADSLGRTYYVDHNTRTTTWTRPAS. 2 stretches are compositionally biased toward polar residues: residues 263–285 and 295–305; these read TWTR…QRLN and SNPSLMQSDSG. WW domains follow at residues 306–339 and 364–397; these read NDLP…DPRN and GPLP…DPRL. An HECT domain is found at 453–786; that stretch reads SAHDLKKRLM…VENTVGFGNE (334 aa). Cys754 functions as the Glycyl thioester intermediate in the catalytic mechanism.

It carries out the reaction S-ubiquitinyl-[E2 ubiquitin-conjugating enzyme]-L-cysteine + [acceptor protein]-L-lysine = [E2 ubiquitin-conjugating enzyme]-L-cysteine + N(6)-ubiquitinyl-[acceptor protein]-L-lysine.. It functions in the pathway protein modification; protein ubiquitination. In terms of biological role, E3 ubiquitin-protein ligase which accepts ubiquitin from an E2 ubiquitin-conjugating enzyme in the form of a thioester and then directly transfers the ubiquitin to targeted substrates. This is E3 ubiquitin-protein ligase pub3 (pub3) from Schizosaccharomyces pombe (strain 972 / ATCC 24843) (Fission yeast).